Consider the following 184-residue polypeptide: Ribosome-recycling factor (184 aa).

It belongs to the RRF family.

It localises to the cytoplasm. Responsible for the release of ribosomes from messenger RNA at the termination of protein biosynthesis. May increase the efficiency of translation by recycling ribosomes from one round of translation to another. The protein is Ribosome-recycling factor of Borrelia hermsii (strain HS1 / DAH).